The chain runs to 122 residues: Phospholipase A2 homolog ECS_00014 (122 aa).

7 disulfide bridges follow: cysteine 26/cysteine 115, cysteine 28/cysteine 44, cysteine 43/cysteine 95, cysteine 49/cysteine 122, cysteine 50/cysteine 88, cysteine 57/cysteine 81, and cysteine 75/cysteine 86. Residues 105–117 are important for membrane-damaging activities in eukaryotes and bacteria; heparin-binding; sequence KKYTYYPNFWCKG.

This sequence belongs to the phospholipase A2 family. Group II subfamily. S49 sub-subfamily. As to quaternary structure, monomer. Expressed by the venom gland.

The protein localises to the secreted. Its function is as follows. Snake venom phospholipase A2 homolog that lacks enzymatic activity. Shows high myotoxin activities and displays edema-inducing activities. Has cytotoxic activities against HUVEC cells (LC(50)=12.2 uL) and human lung adenocarcinoma A549 cells (LC(50)=8.5 uL). The protein is Phospholipase A2 homolog ECS_00014 of Echis carinatus sochureki (Saw-scaled viper).